Reading from the N-terminus, the 301-residue chain is NADH-cytochrome b5 reductase 3 (301 aa).

A lipid anchor (N-myristoyl glycine) is attached at Gly-2. An FAD-binding FR-type domain is found at 40-152 (DIKYPLRLID…RGPNGLLVYQ (113 aa)). Lys-42 carries the post-translational modification N6-acetyllysine. Tyr-43 carries the post-translational modification Phosphotyrosine. N6-acetyllysine is present on Lys-50. Arg-92, Pro-93, Tyr-94, Val-109, Lys-111, and Phe-114 together coordinate FAD. Lys-120 is modified (N6-acetyllysine). FAD is bound by residues Lys-126, Met-127, Ser-128, and Thr-185.

It belongs to the flavoprotein pyridine nucleotide cytochrome reductase family. In terms of assembly, component of a complex composed of cytochrome b5, NADH-cytochrome b5 reductase (CYB5R3) and MTARC2. Interacts with MTLN; the interaction is required to maintain cellular lipid composition and leads to stimulation of mitochondrial respiratory complex I activity. It depends on FAD as a cofactor.

It localises to the endoplasmic reticulum membrane. Its subcellular location is the mitochondrion outer membrane. The enzyme catalyses 2 Fe(III)-[cytochrome b5] + NADH = 2 Fe(II)-[cytochrome b5] + NAD(+) + H(+). Functionally, catalyzes the reduction of two molecules of cytochrome b5 using NADH as the electron donor. The sequence is that of NADH-cytochrome b5 reductase 3 (CYB5R3) from Bos taurus (Bovine).